Here is a 227-residue protein sequence, read N- to C-terminus: Ribonuclease 3 (227 aa).

The RNase III domain occupies 3–130; that stretch reads TNAISKIIKY…LIGAIYLDGG (128 aa). Glutamate 43 serves as a coordination point for Mg(2+). Aspartate 47 is an active-site residue. Residues asparagine 116 and glutamate 119 each coordinate Mg(2+). Glutamate 119 is an active-site residue. Residues 155-224 enclose the DRBM domain; the sequence is DAKTILQEWA…ASLMLAKINY (70 aa).

It belongs to the ribonuclease III family. Homodimer. The cofactor is Mg(2+).

The protein resides in the cytoplasm. The catalysed reaction is Endonucleolytic cleavage to 5'-phosphomonoester.. In terms of biological role, digests double-stranded RNA. Involved in the processing of primary rRNA transcript to yield the immediate precursors to the large and small rRNAs (23S and 16S). Processes some mRNAs, and tRNAs when they are encoded in the rRNA operon. Processes pre-crRNA and tracrRNA of type II CRISPR loci if present in the organism. This chain is Ribonuclease 3, found in Ehrlichia ruminantium (strain Gardel).